Here is a 475-residue protein sequence, read N- to C-terminus: ATP synthase subunit beta (475 aa).

148 to 155 is a binding site for ATP; that stretch reads GGAGVGKT.

Belongs to the ATPase alpha/beta chains family. In terms of assembly, F-type ATPases have 2 components, CF(1) - the catalytic core - and CF(0) - the membrane proton channel. CF(1) has five subunits: alpha(3), beta(3), gamma(1), delta(1), epsilon(1). CF(0) has three main subunits: a(1), b(2) and c(9-12). The alpha and beta chains form an alternating ring which encloses part of the gamma chain. CF(1) is attached to CF(0) by a central stalk formed by the gamma and epsilon chains, while a peripheral stalk is formed by the delta and b chains.

It is found in the cell inner membrane. The enzyme catalyses ATP + H2O + 4 H(+)(in) = ADP + phosphate + 5 H(+)(out). Its function is as follows. Produces ATP from ADP in the presence of a proton gradient across the membrane. The catalytic sites are hosted primarily by the beta subunits. The sequence is that of ATP synthase subunit beta from Psychrobacter sp. (strain PRwf-1).